Consider the following 167-residue polypeptide: MSHIEKQAGELQEKLIAVNRVSKTVKGGRIFSFTALTVVGDGNGRVGFGYGKAREVPAAIQKAMEKARRAMINVALNNGTLQHPVKGAHTGSRVFMQPASEGTGIIAGGAMRAVLEVAGVHNVLAKAYGSTNPINVVRATIAALEDMKSPEMVAAKRGKSVEEILGK.

The region spanning 11-74 (LQEKLIAVNR…EKARRAMINV (64 aa)) is the S5 DRBM domain.

It belongs to the universal ribosomal protein uS5 family. In terms of assembly, part of the 30S ribosomal subunit. Contacts proteins S4 and S8.

In terms of biological role, with S4 and S12 plays an important role in translational accuracy. Its function is as follows. Located at the back of the 30S subunit body where it stabilizes the conformation of the head with respect to the body. This Yersinia pseudotuberculosis serotype O:1b (strain IP 31758) protein is Small ribosomal subunit protein uS5.